The primary structure comprises 208 residues: Imidazoleglycerol-phosphate dehydratase (208 aa).

It belongs to the imidazoleglycerol-phosphate dehydratase family.

Its subcellular location is the cytoplasm. It catalyses the reaction D-erythro-1-(imidazol-4-yl)glycerol 3-phosphate = 3-(imidazol-4-yl)-2-oxopropyl phosphate + H2O. It participates in amino-acid biosynthesis; L-histidine biosynthesis; L-histidine from 5-phospho-alpha-D-ribose 1-diphosphate: step 6/9. This Psychrobacter sp. (strain PRwf-1) protein is Imidazoleglycerol-phosphate dehydratase.